Reading from the N-terminus, the 377-residue chain is Methionine import ATP-binding protein MetN 2 (377 aa).

The region spanning isoleucine 25–leucine 262 is the ABC transporter domain. Residue glycine 59–serine 66 coordinates ATP.

The protein belongs to the ABC transporter superfamily. Methionine importer (TC 3.A.1.24) family. As to quaternary structure, the complex is composed of two ATP-binding proteins (MetN), two transmembrane proteins (MetI) and a solute-binding protein (MetQ).

Its subcellular location is the cell inner membrane. It catalyses the reaction L-methionine(out) + ATP + H2O = L-methionine(in) + ADP + phosphate + H(+). It carries out the reaction D-methionine(out) + ATP + H2O = D-methionine(in) + ADP + phosphate + H(+). Part of the ABC transporter complex MetNIQ involved in methionine import. Responsible for energy coupling to the transport system. This is Methionine import ATP-binding protein MetN 2 from Rhodopseudomonas palustris (strain ATCC BAA-98 / CGA009).